The sequence spans 457 residues: Protein unc-93 homolog A (457 aa).

Helical transmembrane passes span 8–28 (VLVVSFGFLLLFTAYGGLQSL), 42–62 (ALSTLYGGMLLSSMFLPPLLI), 65–85 (LGCKGTIILSMCGYVAFSVGN), 86–106 (FFASWYTLIPTSILLGLGAAP), and 140–160 (IFFLIFQSSGVWGNLISSLVF). The N-linked (GlcNAc...) asparagine glycan is linked to Asn190. 6 helical membrane-spanning segments follow: residues 202 to 222 (TLLGIYTGSGVLAVLMIAAFL), 257 to 277 (LCLLILLPLYSGLQQGFLSSE), 291 to 311 (FVGYVMICFSATDALCSVLYG), 320 to 340 (AVLYVLGAVTHVSCMIALLLW), 344 to 364 (ADHLAVFFVFSGLWGVADAVW), and 395 to 415 (FVIAFGYSMFLCVHVKLYILL).

The protein belongs to the unc-93 family. In terms of tissue distribution, expressed in testis, small intestine, spleen, prostate and ovary.

It is found in the cell membrane. This Homo sapiens (Human) protein is Protein unc-93 homolog A (UNC93A).